Reading from the N-terminus, the 146-residue chain is 3-hydroxyacyl-[acyl-carrier-protein] dehydratase FabZ (146 aa).

The active site involves His49.

This sequence belongs to the thioester dehydratase family. FabZ subfamily.

The protein resides in the cytoplasm. The enzyme catalyses a (3R)-hydroxyacyl-[ACP] = a (2E)-enoyl-[ACP] + H2O. Involved in unsaturated fatty acids biosynthesis. Catalyzes the dehydration of short chain beta-hydroxyacyl-ACPs and long chain saturated and unsaturated beta-hydroxyacyl-ACPs. The polypeptide is 3-hydroxyacyl-[acyl-carrier-protein] dehydratase FabZ (Pseudomonas savastanoi pv. phaseolicola (strain 1448A / Race 6) (Pseudomonas syringae pv. phaseolicola (strain 1448A / Race 6))).